Reading from the N-terminus, the 788-residue chain is Protocadherin beta-18 (788 aa).

The N-terminal stretch at 1 to 28 (MEPGKGRAQPTRQVLLFFVFLGGSLVYS) is a signal peptide. Cadherin domains lie at 29-133 (ETWS…TPTF), 134-242 (LNNH…APEF), 243-347 (EKPV…PPEI), 348-452 (AMTS…APAF), and 453-562 (TQTS…SPFV). Residues 29 to 691 (ETWSYSIAEE…AQADSLTVYL (663 aa)) are Extracellular-facing. N-linked (GlcNAc...) asparagine glycosylation occurs at Asn-169. Residues Asn-419 and Asn-437 are each glycosylated (N-linked (GlcNAc...) asparagine). N-linked (GlcNAc...) asparagine glycosylation occurs at Asn-568. Residues 569–672 (GSAPCTELVP…LVDGFSQPYL (104 aa)) form the Cadherin 6 domain. Residues 692-712 (VVALASVSSLFLFSVFLFVAV) traverse the membrane as a helical segment. The Cytoplasmic portion of the chain corresponds to 713-788 (RLCRRSRAAS…DSDMEKAPPF (76 aa)).

The protein resides in the cell membrane. Potential calcium-dependent cell-adhesion protein. The polypeptide is Protocadherin beta-18 (PCDHB18) (Pan troglodytes (Chimpanzee)).